The chain runs to 136 residues: Small ribosomal subunit protein uS19 (136 aa).

The protein belongs to the universal ribosomal protein uS19 family.

Functionally, protein S19 forms a complex with S13 that binds strongly to the 16S ribosomal RNA. The sequence is that of Small ribosomal subunit protein uS19 from Methanocorpusculum labreanum (strain ATCC 43576 / DSM 4855 / Z).